Here is a 62-residue protein sequence, read N- to C-terminus: Ferredoxin-1 (62 aa).

2 consecutive 4Fe-4S ferredoxin-type domains span residues 2–28 (ALYI…SAGS) and 29–62 (EIYV…IVQG). The [4Fe-4S] cluster site is built by C9, C12, C15, C19, C38, C41, C50, and C54.

[4Fe-4S] cluster is required as a cofactor.

In terms of biological role, ferredoxins are iron-sulfur proteins that transfer electrons in a wide variety of metabolic reactions. This chain is Ferredoxin-1, found in Chlorobaculum tepidum (strain ATCC 49652 / DSM 12025 / NBRC 103806 / TLS) (Chlorobium tepidum).